The sequence spans 446 residues: Phosphoglucosamine mutase (446 aa).

Ser-101 serves as the catalytic Phosphoserine intermediate. Residues Ser-101, Asp-240, Asp-242, and Asp-244 each contribute to the Mg(2+) site. A Phosphoserine modification is found at Ser-101.

This sequence belongs to the phosphohexose mutase family. It depends on Mg(2+) as a cofactor. Post-translationally, activated by phosphorylation.

It catalyses the reaction alpha-D-glucosamine 1-phosphate = D-glucosamine 6-phosphate. Functionally, catalyzes the conversion of glucosamine-6-phosphate to glucosamine-1-phosphate. The sequence is that of Phosphoglucosamine mutase from Pseudomonas putida (strain ATCC 700007 / DSM 6899 / JCM 31910 / BCRC 17059 / LMG 24140 / F1).